The sequence spans 276 residues: 2-dehydro-3-deoxyphosphooctonate aldolase (276 aa).

This sequence belongs to the KdsA family.

It is found in the cytoplasm. It catalyses the reaction D-arabinose 5-phosphate + phosphoenolpyruvate + H2O = 3-deoxy-alpha-D-manno-2-octulosonate-8-phosphate + phosphate. The protein operates within carbohydrate biosynthesis; 3-deoxy-D-manno-octulosonate biosynthesis; 3-deoxy-D-manno-octulosonate from D-ribulose 5-phosphate: step 2/3. It functions in the pathway bacterial outer membrane biogenesis; lipopolysaccharide biosynthesis. The chain is 2-dehydro-3-deoxyphosphooctonate aldolase from Helicobacter pylori (strain HPAG1).